We begin with the raw amino-acid sequence, 501 residues long: Glycerol kinase (501 aa).

Residue Thr11 participates in ADP binding. The ATP site is built by Thr11, Thr12, and Ser13. Sn-glycerol 3-phosphate is bound at residue Thr11. Arg15 contributes to the ADP binding site. 4 residues coordinate sn-glycerol 3-phosphate: Arg81, Glu82, Tyr133, and Asp242. Positions 81, 82, 133, 242, and 243 each coordinate glycerol. 2 residues coordinate ADP: Thr264 and Gly307. Residues Thr264, Gly307, Gln311, and Gly409 each contribute to the ATP site. Residues Gly409 and Asn413 each coordinate ADP.

It belongs to the FGGY kinase family.

The catalysed reaction is glycerol + ATP = sn-glycerol 3-phosphate + ADP + H(+). It functions in the pathway polyol metabolism; glycerol degradation via glycerol kinase pathway; sn-glycerol 3-phosphate from glycerol: step 1/1. Inhibited by fructose 1,6-bisphosphate (FBP). Functionally, key enzyme in the regulation of glycerol uptake and metabolism. Catalyzes the phosphorylation of glycerol to yield sn-glycerol 3-phosphate. The chain is Glycerol kinase from Borreliella afzelii (strain PKo) (Borrelia afzelii).